The chain runs to 722 residues: MQQRHLSQSAHSHGHGTRRAHRRNTIAIAVATLAVAACGGFGTNGSGGNTGPNVKPAFISGPVGVKSYDGNTDDLLTAGLGKDGLAAAAPAFANPNAPTAVELRRNAIWANYRAIVDVQAAGGYGSLYGPNVDAKGNVTTGQGKVPGTEYIAFTDDGSGRQNVTVMAQVPDGFDVKHPCIISATSSGSRGVYGGIAVGEWGLKHNCAVAYTDKGTGAAPHDLGSDTVPLIDGTRQTRAGAGTQAQFAAQPGASETLAGFNSSTPHRLAFKHAHSQQNPEANWGANTLQAIQFTLWAVNDKFGRTNTDGMRQATFTPANVLVIASAISNGGGAAIAAAEQDTGGLIDGVAVGEPNVNLPPTAGVVVKRGGVPVAASGKHLYDYTTIANLYQLCASQDASLGNAPFAKTAGQAALNRCASLAAKKMIAGGSTSAQATSALDALHRAGWEPESDDLFASLSALEVGSSISVTYANAYARASVTDRLCHYSFSSPGSPPQANPVTAPAAALAGLFSTGNGIPPTTAVTLMNDANPSGAMRDFTSISPSTKLADGNVDGALCLRGLLDTRNPALMTGIGQTYRTGNLGGRPSVIVQGRSDGLLPVNHTSRPYLGLNKHVEGASSRLSYIEVTNGQHFDGFIDVIPGYAKRYIPMHVYVNRALDAVYANLRDGTPLPPSQVVRTTPRGGADTDTVGPRIQPSNVPPIAATPAAGDAITVTGSTVDVPN.

The span at 1-11 shows a compositional bias: polar residues; sequence MQQRHLSQSAH. A disordered region spans residues 1–20; the sequence is MQQRHLSQSAHSHGHGTRRA. The signal sequence occupies residues 1-36; that stretch reads MQQRHLSQSAHSHGHGTRRAHRRNTIAIAVATLAVA. The active-site Charge relay system is the Ser-327. Positions 671 to 697 are disordered; sequence PPSQVVRTTPRGGADTDTVGPRIQPSN.

Belongs to the D-(-)-3-hydroxybutyrate oligomer hydrolase family.

The protein resides in the secreted. The catalysed reaction is (3R)-hydroxybutanoate dimer + H2O = 2 (R)-3-hydroxybutanoate + H(+). It participates in lipid metabolism; butanoate metabolism. Functionally, participates in the degradation of poly-3-hydroxybutyrate (PHB). It works downstream of poly(3-hydroxybutyrate) depolymerase, hydrolyzing D(-)-3-hydroxybutyrate oligomers of various length (3HB-oligomers) into 3HB-monomers. The protein is D-(-)-3-hydroxybutyrate oligomer hydrolase of Cupriavidus metallidurans (strain ATCC 43123 / DSM 2839 / NBRC 102507 / CH34) (Ralstonia metallidurans).